A 311-amino-acid polypeptide reads, in one-letter code: Malate dehydrogenase (311 aa).

NAD(+) contacts are provided by residues 7-13 (GAAGGIG) and Asp-34. 2 residues coordinate substrate: Arg-81 and Arg-87. NAD(+) is bound by residues Asn-94 and 117 to 119 (ITN). Asn-119 and Arg-153 together coordinate substrate. The Proton acceptor role is filled by His-177. NAD(+) is bound at residue Met-227.

The protein belongs to the LDH/MDH superfamily. MDH type 1 family. As to quaternary structure, homodimer.

It catalyses the reaction (S)-malate + NAD(+) = oxaloacetate + NADH + H(+). Catalyzes the reversible oxidation of malate to oxaloacetate. The sequence is that of Malate dehydrogenase from Haemophilus influenzae (strain PittEE).